Reading from the N-terminus, the 405-residue chain is Probable succinyl-diaminopimelate desuccinylase (405 aa).

Histidine 72 is a Zn(2+) binding site. Residue aspartate 74 is part of the active site. A Zn(2+)-binding site is contributed by aspartate 105. The Proton acceptor role is filled by glutamate 139. Zn(2+)-binding residues include glutamate 140, glutamate 165, and histidine 377.

The protein belongs to the peptidase M20A family. It depends on Zn(2+) as a cofactor. Requires Co(2+) as cofactor.

It catalyses the reaction N-succinyl-(2S,6S)-2,6-diaminopimelate + H2O = (2S,6S)-2,6-diaminopimelate + succinate. Its pathway is amino-acid biosynthesis; L-lysine biosynthesis via DAP pathway; LL-2,6-diaminopimelate from (S)-tetrahydrodipicolinate (succinylase route): step 3/3. This is Probable succinyl-diaminopimelate desuccinylase (dapE) from Staphylococcus epidermidis (strain ATCC 35984 / DSM 28319 / BCRC 17069 / CCUG 31568 / BM 3577 / RP62A).